Here is a 247-residue protein sequence, read N- to C-terminus: tRNA pseudouridine synthase A 1 (247 aa).

Residue Asp-53 is the Nucleophile of the active site. Tyr-111 contacts substrate.

This sequence belongs to the tRNA pseudouridine synthase TruA family. As to quaternary structure, homodimer.

It catalyses the reaction uridine(38/39/40) in tRNA = pseudouridine(38/39/40) in tRNA. Formation of pseudouridine at positions 38, 39 and 40 in the anticodon stem and loop of transfer RNAs. The protein is tRNA pseudouridine synthase A 1 of Bacillus cereus (strain ATCC 14579 / DSM 31 / CCUG 7414 / JCM 2152 / NBRC 15305 / NCIMB 9373 / NCTC 2599 / NRRL B-3711).